The primary structure comprises 63 residues: Large ribosomal subunit protein bL28c (63 aa).

This sequence belongs to the bacterial ribosomal protein bL28 family.

The protein localises to the plastid. Its subcellular location is the chloroplast. The chain is Large ribosomal subunit protein bL28c (rpl28) from Porphyra purpurea (Red seaweed).